Here is a 109-residue protein sequence, read N- to C-terminus: Large ribosomal subunit protein uL24 (109 aa).

The interval 85-109 is disordered; sequence KYGTDPKTNKKVRLSRKTNNLVGGQ.

This sequence belongs to the universal ribosomal protein uL24 family. Part of the 50S ribosomal subunit.

Functionally, one of two assembly initiator proteins, it binds directly to the 5'-end of the 23S rRNA, where it nucleates assembly of the 50S subunit. In terms of biological role, one of the proteins that surrounds the polypeptide exit tunnel on the outside of the subunit. This chain is Large ribosomal subunit protein uL24, found in Mycoplasmoides gallisepticum (strain R(low / passage 15 / clone 2)) (Mycoplasma gallisepticum).